The following is a 525-amino-acid chain: Acyl-lipid (9-3)-desaturase (525 aa).

The region spanning 102 to 176 (KSTHPLSEVA…LQDFYIGDVE (75 aa)) is the Cytochrome b5 heme-binding domain. Heme contacts are provided by His-137 and His-159. A helical membrane pass occupies residues 216–236 (VAIFAASIAIICWSKTISAVL). The short motif at 254-258 (HDFLH) is the Histidine box-1 element. Residues 266-286 (WLNEVVGYVIGNAVLGFSTGW) form a helical membrane-spanning segment. The Histidine box-2 signature appears at 291 to 295 (HNLHH). 3 helical membrane-spanning segments follow: residues 340–360 (QHLF…FWSW), 378–398 (GTVL…LPGW), and 401–421 (LVWM…VFVL). Positions 462–466 (QIEHH) match the Histidine box-3 motif.

Belongs to the fatty acid desaturase type 1 family.

It localises to the membrane. The catalysed reaction is (9Z,12Z,15Z)-octadecatrienoyl-containing glycerolipid + 2 Fe(II)-[cytochrome b5] + O2 + 2 H(+) = (6Z,9Z,12Z,15Z)-octadecatetraenoyl-containing glycerolipid + 2 Fe(III)-[cytochrome b5] + 2 H2O. It catalyses the reaction a (9Z,12Z)-octadecadienoyl-containing glycerolipid + 2 Fe(II)-[cytochrome b5] + O2 + 2 H(+) = (6Z,9Z,12Z)-octadecatrienoyl-containing glycerolipid + 2 Fe(III)-[cytochrome b5] + 2 H2O. Its pathway is lipid metabolism; polyunsaturated fatty acid biosynthesis. Its function is as follows. Fatty acid desaturase able to introduce a delta(6)-double bond into delta(9)-unsaturated fatty-acid substrates. Can use both linoleic acid (18:2(9Z,12Z)) and alpha-linolenic acid (18:3(9Z,12Z,15Z)) as substrates. Required for the biosynthesis of arachidonic acid (20:4(5z,8Z,11Z,14Z)). The chain is Acyl-lipid (9-3)-desaturase from Physcomitrium patens (Spreading-leaved earth moss).